The primary structure comprises 367 residues: Developmentally-regulated GTP-binding protein 1 (367 aa).

Residue S2 is modified to N-acetylserine. The tract at residues 2-16 (SSTLAKIAEIEAEMA) is required for interaction with STK16. At K22 the chain carries (3S)-3-hydroxylysine. Residues 65-290 (ARIGFVGFPS…LLEKIWDYLK (226 aa)) enclose the OBG-type G domain. Residues 71-78 (GFPSVGKS), 96-100 (FTTLT), 117-120 (DLPG), 248-251 (NKID), and 271-273 (SAH) each bind GTP. 2 residues coordinate Mg(2+): S78 and T98. T100 carries the post-translational modification Phosphothreonine; by STK16. The TGS domain occupies 290–366 (KLVRIYTKPK…EDEDVIQIVK (77 aa)).

This sequence belongs to the TRAFAC class OBG-HflX-like GTPase superfamily. OBG GTPase family. Interacts (via its C-terminal) with TAL1. Interacts with DFRP1/ZC3H15; this interaction prevents DRG1 poly-ubiquitination and degradation by proteasome. DRG1-ZC3H15/DFRP1 complex co-sediments with polysomes. Interacts with STK16. Interacts with JMJD7. Post-translationally, sumoylated by UBE2I in response to MEKK1-mediated stimuli. In terms of processing, hydroxylated (with S stereochemistry) at C-3 of Lys-22 by JMJD7. Phosphorylated at Thr-100 by STK16. Post-translationally, polyubiquitinated; this modification induces proteolytic degradation and is impaired by interaction with ZC3H15.

The protein resides in the nucleus. Its subcellular location is the cytoplasm. The catalysed reaction is GTP + H2O = GDP + phosphate + H(+). Its activity is regulated as follows. The GTPase activity is enhanced by potassium ions as well as by DFRP1 binding. Its function is as follows. Catalyzes the conversion of GTP to GDP through hydrolysis of the gamma-phosphate bond in GTP. Appears to have an intrinsic GTPase activity that is stimulated by ZC3H15/DFRP1 binding likely by increasing the affinity for the potassium ions. When hydroxylated at C-3 of 'Lys-22' by JMJD7, may bind to RNA and play a role in translation. Binds to microtubules and promotes microtubule polymerization and bundling that are required for mitotic spindle assembly during prophase to anaphase transition. GTPase activity is not necessary for these microtubule-related functions. The chain is Developmentally-regulated GTP-binding protein 1 (DRG1) from Bos taurus (Bovine).